The sequence spans 146 residues: Angiogenin (146 aa).

The N-terminal stretch at Met-1–Ala-24 is a signal peptide. Gln-25 carries the post-translational modification Pyrrolidone carboxylic acid. His-37 functions as the Proton acceptor in the catalytic mechanism. Arg-45 contacts tRNA. 3 disulfides stabilise this stretch: Cys-50/Cys-105, Cys-63/Cys-116, and Cys-81/Cys-131. The short motif at Arg-55 to Leu-59 is the Nucleolar localization signal element. 2 residues coordinate tRNA: Cys-105 and Ile-127. The active-site Proton donor is His-138.

This sequence belongs to the pancreatic ribonuclease family. In terms of assembly, homodimer. Interacts with RNH1; inhibiting ANG ribonuclease activity. Interacts with PCNA.

It is found in the secreted. It localises to the nucleus. The protein localises to the nucleolus. The protein resides in the cytoplasm. Its subcellular location is the stress granule. With respect to regulation, has weak tRNA ribonuclease activity by itself due to partial autoinhibition by its C-terminus, which folds into a short alpha-helix that partially occludes the substrate-binding site. In absence of stress, the ribonuclease activity is inhibited by RNH1 in the cytoplasm. In response to stress, dissociates from RNH1 in the cytoplasm and associates with cytoplasmic ribosomes with vacant A-sites: ribosomes directly activate the tRNA ribonuclease activity of ANG by refolding the C-terminal alpha-helix. In response to stress, the angiogenic activity of ANG is inhibited by RNH1 in the nucleus. Its function is as follows. Secreted ribonuclease that can either promote or restrict cell proliferation of target cells, depending on the context. Endocytosed in target cells via its receptor PLXNB2 and translocates to the cytoplasm or nucleus. Under stress conditions, localizes to the cytoplasm and promotes the assembly of stress granules (SGs): specifically cleaves a subset of tRNAs within anticodon loops to produce tRNA-derived stress-induced fragments (tiRNAs), resulting in translation repression and inhibition of cell proliferation. tiRNas also prevent formation of apoptosome, thereby promoting cell survival. Preferentially cleaves RNAs between a pyrimidine and an adenosine residue, suggesting that it cleaves the anticodon loop of tRNA(Ala) (32-UUAGCAU-38) after positions 33 and 36. Cleaves a subset of tRNAs, including tRNA(Ala), tRNA(Glu), tRNA(Gly), tRNA(Lys), tRNA(Val), tRNA(His), tRNA(Asp) and tRNA(Sec). Under growth conditions and in differentiated cells, translocates to the nucleus and stimulates ribosomal RNA (rRNA) transcription, including that containing the initiation site sequences of 45S rRNA, thereby promoting cell growth and proliferation. Angiogenin induces vascularization of normal and malignant tissues via its ability to promote rRNA transcription. Involved in hematopoietic stem and progenitor cell (HSPC) growth and survival by promoting rRNA transcription in growth conditions and inhibiting translation in response to stress, respectively. Mediates the crosstalk between myeloid and intestinal epithelial cells to protect the intestinal epithelial barrier integrity: secreted by myeloid cells and promotes intestinal epithelial cells proliferation and survival. Also mediates osteoclast-endothelial cell crosstalk in growing bone: produced by osteoclasts and protects the neighboring vascular cells against senescence by promoting rRNA transcription. The chain is Angiogenin (ANG) from Chlorocebus aethiops (Green monkey).